The chain runs to 748 residues: Acetyl-CoA decarbonylase/synthase complex subunit beta 1 (748 aa).

4 residues coordinate [Ni-Fe-S] cluster: C480, C483, C569, and C571.

This sequence belongs to the CdhC family. Monomer. The ACDS complex is made up of alpha, epsilon, beta, gamma and delta chains with a probable stoichiometry of (alpha(2)epsilon(2))(4)-beta(8)-(gamma(1)delta(1))(8) (Potential). Requires [Ni-Fe-S] cluster as cofactor.

The catalysed reaction is Co(I)-[corrinoid Fe-S protein] + acetyl-CoA + H(+) = methyl-Co(III)-[corrinoid Fe-S protein] + CO + CoA. Its function is as follows. Part of a complex that catalyzes the reversible cleavage of acetyl-CoA, allowing autotrophic growth from CO(2). The alpha-epsilon complex generates CO from CO(2), while the beta subunit (this protein) combines the CO with CoA and a methyl group to form acetyl-CoA. The methyl group, which is incorporated into acetyl-CoA, is transferred to the beta subunit by a corrinoid iron-sulfur protein (the gamma-delta complex). The polypeptide is Acetyl-CoA decarbonylase/synthase complex subunit beta 1 (cdhC1) (Methanocaldococcus jannaschii (strain ATCC 43067 / DSM 2661 / JAL-1 / JCM 10045 / NBRC 100440) (Methanococcus jannaschii)).